Consider the following 204-residue polypeptide: Superoxide dismutase [Mn] (204 aa).

H27 is a binding site for Mn(2+). T34 and T70 each carry phosphothreonine. Mn(2+) contacts are provided by H82, D164, and H168.

The protein belongs to the iron/manganese superoxide dismutase family. Homodimer. Requires Mn(2+) as cofactor.

The enzyme catalyses 2 superoxide + 2 H(+) = H2O2 + O2. In terms of biological role, destroys superoxide anion radicals which are normally produced within the cells and which are toxic to biological systems. The chain is Superoxide dismutase [Mn] (sodA) from Bacillus caldotenax.